Reading from the N-terminus, the 154-residue chain is MDNLKEKPLSYNINNNNLNNNNNNNNNNNNNNNNINNNINNNNFKYVSFSESLEDIGYQNQYIIDKDEDYYIQEQRYIRQNNQSDDEEDFNNNNYEDSIKISLIQKSFIKNKKNKIIITTIVVLLMIAVSLGLILAWQGVFDQIHNNNNNSKDE.

The tract at residues 1–37 is disordered; the sequence is MDNLKEKPLSYNINNNNLNNNNNNNNNNNNNNNNINN. Positions 12–37 are enriched in low complexity; that stretch reads NINNNNLNNNNNNNNNNNNNNNNINN. The N-linked (GlcNAc...) asparagine glycan is linked to asparagine 82. The chain crosses the membrane as a helical span at residues 116–136; the sequence is IIITTIVVLLMIAVSLGLILA. N-linked (GlcNAc...) asparagine glycosylation occurs at asparagine 149.

The protein resides in the membrane. This is an uncharacterized protein from Dictyostelium discoideum (Social amoeba).